Reading from the N-terminus, the 60-residue chain is Metallothionein B (60 aa).

Residues 1–28 are beta; the sequence is MDPCDCSKSGTCNCGGSCTCTNCSCTSC. Positions 4, 6, 12, 14, 18, 20, 23, 25, 28, 32, 33, 35, 36, 40, 43, 47, 49, 54, 58, and 59 each coordinate a divalent metal cation. The segment at 29–60 is alpha; that stretch reads KKSCCPCCPSGCTKCASGCVCKGKTCDTSCCQ.

This sequence belongs to the metallothionein superfamily. Type 1 family.

In terms of biological role, metallothioneins have a high content of cysteine residues that bind various heavy metals. The polypeptide is Metallothionein B (mtb) (Chionodraco hamatus (Antarctic teleost icefish)).